A 1004-amino-acid polypeptide reads, in one-letter code: ABC transporter G family member 25 (1004 aa).

The signal sequence occupies residues 1–27 (MAASQLLAAAVAAAVFLAALLVPPARC). A helical transmembrane segment spans residues 271–291 (ATALFGGILIVILSVVLLLVY). Residues 343–373 (SDQLAASSNEARHATEGNGKRSKNRKKLAHA) are disordered. Basic and acidic residues predominate over residues 352-361 (EARHATEGNG). The segment covering 362 to 372 (KRSKNRKKLAH) has biased composition (basic residues). An ABC transporter domain is found at 419 to 659 (VVFKGLTLSI…FSSLGIKVPE (241 aa)). Position 451 to 458 (451 to 458 (GPSGAGKT)) interacts with ATP. 6 consecutive transmembrane segments (helical) span residues 776-796 (ATLQ…IGTI), 804-824 (FGVA…QLAA), 886-906 (LVFL…AIWF), 907-927 (ELGL…LVGT), 943-963 (WALE…WLIT), and 978-998 (FVLC…IALL).

The protein belongs to the ABC transporter superfamily. ABCG family. Eye pigment precursor importer (TC 3.A.1.204) subfamily.

The protein resides in the membrane. This is ABC transporter G family member 25 from Oryza sativa subsp. japonica (Rice).